Consider the following 273-residue polypeptide: Dermonecrotic toxin LdSicTox-alphaIB1avi (273 aa).

Residue His-5 is part of the active site. Residues Glu-25 and Asp-27 each coordinate Mg(2+). His-41 serves as the catalytic Nucleophile. Cystine bridges form between Cys-45–Cys-51 and Cys-47–Cys-190. Asp-85 contributes to the Mg(2+) binding site. Asn-250 carries an N-linked (GlcNAc...) asparagine glycan.

The protein belongs to the arthropod phospholipase D family. Class II subfamily. It depends on Mg(2+) as a cofactor. As to expression, expressed by the venom gland.

It is found in the secreted. It catalyses the reaction an N-(acyl)-sphingosylphosphocholine = an N-(acyl)-sphingosyl-1,3-cyclic phosphate + choline. It carries out the reaction an N-(acyl)-sphingosylphosphoethanolamine = an N-(acyl)-sphingosyl-1,3-cyclic phosphate + ethanolamine. The enzyme catalyses a 1-acyl-sn-glycero-3-phosphocholine = a 1-acyl-sn-glycero-2,3-cyclic phosphate + choline. The catalysed reaction is a 1-acyl-sn-glycero-3-phosphoethanolamine = a 1-acyl-sn-glycero-2,3-cyclic phosphate + ethanolamine. Functionally, dermonecrotic toxins cleave the phosphodiester linkage between the phosphate and headgroup of certain phospholipids (sphingolipid and lysolipid substrates), forming an alcohol (often choline) and a cyclic phosphate. This toxin acts on sphingomyelin (SM). It may also act on ceramide phosphoethanolamine (CPE), lysophosphatidylcholine (LPC) and lysophosphatidylethanolamine (LPE), but not on lysophosphatidylserine (LPS), and lysophosphatidylglycerol (LPG). It acts by transphosphatidylation, releasing exclusively cyclic phosphate products as second products. Induces dermonecrosis, hemolysis, increased vascular permeability, edema, inflammatory response, and platelet aggregation. This chain is Dermonecrotic toxin LdSicTox-alphaIB1avi, found in Loxosceles deserta (Desert recluse spider).